A 208-amino-acid polypeptide reads, in one-letter code: Imidazole glycerol phosphate synthase subunit HisH (208 aa).

Positions 2–208 (NVTIVDYNSG…LKIIENFLNL (207 aa)) constitute a Glutamine amidotransferase type-1 domain. Residue Cys-85 is the Nucleophile of the active site. Active-site residues include His-190 and Glu-192.

Heterodimer of HisH and HisF.

The protein resides in the cytoplasm. It catalyses the reaction 5-[(5-phospho-1-deoxy-D-ribulos-1-ylimino)methylamino]-1-(5-phospho-beta-D-ribosyl)imidazole-4-carboxamide + L-glutamine = D-erythro-1-(imidazol-4-yl)glycerol 3-phosphate + 5-amino-1-(5-phospho-beta-D-ribosyl)imidazole-4-carboxamide + L-glutamate + H(+). The enzyme catalyses L-glutamine + H2O = L-glutamate + NH4(+). It participates in amino-acid biosynthesis; L-histidine biosynthesis; L-histidine from 5-phospho-alpha-D-ribose 1-diphosphate: step 5/9. Functionally, IGPS catalyzes the conversion of PRFAR and glutamine to IGP, AICAR and glutamate. The HisH subunit catalyzes the hydrolysis of glutamine to glutamate and ammonia as part of the synthesis of IGP and AICAR. The resulting ammonia molecule is channeled to the active site of HisF. The sequence is that of Imidazole glycerol phosphate synthase subunit HisH from Pelagibacter ubique (strain HTCC1062).